Reading from the N-terminus, the 645-residue chain is Envelope glycoprotein (645 aa).

Residues 1-33 (MESPAFSKPLKDKINPWGPLIIMGILVRAGASV) form the signal peptide. Positions 32 to 237 (SVQRDSPHQV…QVLNVGPRVP (206 aa)) are receptor-binding domain (RBD). The Extracellular portion of the chain corresponds to 34–585 (QRDSPHQVFN…FNRSPWFTTL (552 aa)). N-linked (GlcNAc...) asparagine; by host glycans are attached at residues asparagine 43 and asparagine 58. Disulfide bonds link cysteine 113–cysteine 130 and cysteine 122–cysteine 135. Positions 259-286 (PRPPRPPPSGAASMVPGAPPPSQQPGTG) are disordered. Asparagine 301 carries N-linked (GlcNAc...) asparagine; by host glycosylation. Disulfide bonds link cysteine 311-cysteine 314, cysteine 311-cysteine 538, cysteine 341-cysteine 395, cysteine 360-cysteine 372, cysteine 402-cysteine 415, and cysteine 530-cysteine 537. The CXXC motif lies at 311–314 (CWLC). Asparagine 333 and asparagine 340 each carry an N-linked (GlcNAc...) asparagine; by host glycan. N-linked (GlcNAc...) asparagine; by host glycans are attached at residues asparagine 373 and asparagine 409. Residues 447-467 (VSLTLALLLGGLTMGGIAAGV) form a fusion peptide region. The stretch at 490-510 (DLGALEKSVSALEKSLTSLSE) forms a coiled coil. The segment at 513–529 (LQNRRGLDLLFLKEGGL) is immunosuppression. Residues 530–538 (CAALKEECC) carry the CX6CC motif. Residues 586–606 (ISTIMGPLIVLLLILLFGPCI) form a helical membrane-spanning segment. The S-palmitoyl cysteine; by host moiety is linked to residue cysteine 605. Topologically, residues 607–640 (LNRLVQFVKDRISVVQALVLTQQYHQLKSIDPEE) are cytoplasmic. A YXXL motif; contains endocytosis signal motif is present at residues 630-633 (YHQL).

In terms of assembly, the mature envelope protein (Env) consists of a trimer of SU-TM heterodimers attached by a labile interchain disulfide bond. The activated Env consists of SU monomers and TM trimers. Post-translationally, specific enzymatic cleavages in vivo yield mature proteins. Envelope glycoproteins are synthesized as an inactive precursor that is N-glycosylated and processed likely by host cell furin or by a furin-like protease in the Golgi to yield the mature SU and TM proteins. The cleavage site between SU and TM requires the minimal sequence [KR]-X-[KR]-R. The R-peptide is released from the C-terminus of the cytoplasmic tail of the TM protein upon particle formation as a result of proteolytic cleavage by the viral protease. Cleavage of this peptide is required for TM to become fusogenic. The CXXC motif is highly conserved across a broad range of retroviral envelope proteins. It is thought to participate in the formation of a labile disulfide bond possibly with the CX6CC motif present in the transmembrane protein. Isomerization of the intersubunit disulfide bond to an SU intrachain disulfide bond is thought to occur upon receptor recognition in order to allow membrane fusion. In terms of processing, the transmembrane protein is palmitoylated. Post-translationally, the R-peptide is palmitoylated.

The protein resides in the virion membrane. It is found in the host cell membrane. In terms of biological role, the surface protein (SU) attaches the virus to the host cell by binding to its receptor. This interaction activates a thiol in a CXXC motif of the C-terminal domain, where the other Cys residue participates in the formation of the intersubunit disulfide. The activated thiol will attack the disulfide and cause its isomerization into a disulfide isomer within the motif. This leads to SU displacement and TM refolding, and is thought to activate its fusogenic potential by unmasking its fusion peptide. Fusion occurs at the host cell plasma membrane. Functionally, the transmembrane protein (TM) acts as a class I viral fusion protein. Under the current model, the protein has at least 3 conformational states: pre-fusion native state, pre-hairpin intermediate state, and post-fusion hairpin state. During viral and target cell membrane fusion, the coiled coil regions (heptad repeats) assume a trimer-of-hairpins structure, positioning the fusion peptide in close proximity to the C-terminal region of the ectodomain. The formation of this structure appears to drive apposition and subsequent fusion of viral and target cell membranes. Membranes fusion leads to delivery of the nucleocapsid into the cytoplasm. In Xenotropic MuLV-related virus (isolate VP42) (XMRV), this protein is Envelope glycoprotein (env).